We begin with the raw amino-acid sequence, 220 residues long: uncharacterized protein (220 aa).

This is an uncharacterized protein from Mycoplasma pneumoniae (strain ATCC 29342 / M129 / Subtype 1) (Mycoplasmoides pneumoniae).